Reading from the N-terminus, the 98-residue chain is NADH-ubiquinone oxidoreductase chain 4L (98 aa).

Transmembrane regions (helical) follow at residues 1–21 (MTMVYANIFLAFIMSLMGLLM), 29–49 (SLLCLEGMMLSLFVMMTVTIL), and 61–81 (IILLVFAACEAALGLSLLVMV).

The protein belongs to the complex I subunit 4L family. As to quaternary structure, core subunit of respiratory chain NADH dehydrogenase (Complex I) which is composed of 45 different subunits.

It is found in the mitochondrion inner membrane. It catalyses the reaction a ubiquinone + NADH + 5 H(+)(in) = a ubiquinol + NAD(+) + 4 H(+)(out). Functionally, core subunit of the mitochondrial membrane respiratory chain NADH dehydrogenase (Complex I) which catalyzes electron transfer from NADH through the respiratory chain, using ubiquinone as an electron acceptor. Part of the enzyme membrane arm which is embedded in the lipid bilayer and involved in proton translocation. In Mirounga angustirostris (Northern elephant seal), this protein is NADH-ubiquinone oxidoreductase chain 4L (MT-ND4L).